Here is a 347-residue protein sequence, read N- to C-terminus: Quinolinate synthase (347 aa).

Residues His47 and Ser68 each contribute to the iminosuccinate site. Cys113 is a [4Fe-4S] cluster binding site. Iminosuccinate-binding positions include 139–141 (YAN) and Ser156. Cys200 serves as a coordination point for [4Fe-4S] cluster. Iminosuccinate is bound by residues 226–228 (HPE) and Thr243. Residue Cys297 participates in [4Fe-4S] cluster binding.

The protein belongs to the quinolinate synthase family. Type 1 subfamily. It depends on [4Fe-4S] cluster as a cofactor.

The protein localises to the cytoplasm. It carries out the reaction iminosuccinate + dihydroxyacetone phosphate = quinolinate + phosphate + 2 H2O + H(+). The protein operates within cofactor biosynthesis; NAD(+) biosynthesis; quinolinate from iminoaspartate: step 1/1. Catalyzes the condensation of iminoaspartate with dihydroxyacetone phosphate to form quinolinate. The polypeptide is Quinolinate synthase (Shigella flexneri serotype 5b (strain 8401)).